Here is a 2313-residue protein sequence, read N- to C-terminus: Cell surface glycoprotein 1 (2313 aa).

The N-terminal stretch at 1-28 (MKRKNKVLSILLTLLLIISTTSVNMSFA) is a signal peptide. Cohesin domains are found at residues 34–197 (IEMV…VVEA) and 205–367 (VALE…EIVV). The segment covering 369 to 378 (GEEPGEEPTE) has biased composition (acidic residues). Residues 369–400 (GEEPGEEPTEEPVPTETSVDPTPTVTEEPVPS) form a disordered region. Over residues 380 to 400 (PVPTETSVDPTPTVTEEPVPS) the composition is skewed to low complexity. The 163-residue stretch at 407 to 569 (VIMELDKTKV…SVVQPGEIVV (163 aa)) folds into the Cohesin 3 domain. A compositionally biased stretch (acidic residues) spans 571 to 580 (GEEPGEEPTE). The segment at 571–602 (GEEPGEEPTEEPVPTETSVDPTPTVTEEPVPS) is disordered. Low complexity predominate over residues 582–602 (PVPTETSVDPTPTVTEEPVPS). In terms of domain architecture, Cohesin 4 spans 609-771 (VIMELDKTKV…SVVQPGEIVA (163 aa)). Over residues 772-782 (EGEEPGEEPTE) the composition is skewed to acidic residues. Residues 772–805 (EGEEPGEEPTEEPVPTETSADPTPTVTEEPVPSE) are disordered. The segment covering 784-803 (PVPTETSADPTPTVTEEPVP) has biased composition (low complexity). A Cohesin 5 domain is found at 811-973 (VIMELDKTKV…SVVQPGEIVA (163 aa)). Acidic residues predominate over residues 974 to 984 (EGEEPGEEPTE). The segment at 974-1007 (EGEEPGEEPTEEPVPTETPVDPTPTVTEEPVPSE) is disordered. A compositionally biased stretch (low complexity) spans 986–1007 (PVPTETPVDPTPTVTEEPVPSE). The region spanning 1013–1175 (VIMELDKTKV…SVVQPGEIVA (163 aa)) is the Cohesin 6 domain. Disordered regions lie at residues 1177–1203 (GEEP…EPVP) and 1374–2111 (ASDE…PDGS). The span at 1184–1203 (PVPTETPVDPTPTVTEEPVP) shows a compositional bias: low complexity. Residues 1211-1375 (VIMELDKTKV…IQPAPIKAAS (165 aa)) enclose the Cohesin 7 domain. Low complexity predominate over residues 1376–1390 (DEPIPTDTPSDEPTP). The segment at 1383 to 2025 (TPSDEPTPSD…SDEPTPSETP (643 aa)) is approximate tandem repeats of T-P-S-D-E-P. Over residues 1391–1411 (SDEPTPSDEPTPSDEPTPSDE) the composition is skewed to pro residues. Over residues 1423–1433 (PTDTPSDEPTP) the composition is skewed to low complexity. The span at 1434 to 1454 (SDEPTPSDEPTPSDEPTPSDE) shows a compositional bias: pro residues. Low complexity predominate over residues 1466–1476 (PTDTPSDEPTP). The span at 1477 to 1497 (SDEPTPSDEPTPSDEPTPSDE) shows a compositional bias: pro residues. Residues 1509 to 1519 (PTDTPSDEPTP) are compositionally biased toward low complexity. Residues 1520–1540 (SDEPTPSDEPTPSDEPTPSDE) are compositionally biased toward pro residues. Low complexity predominate over residues 1552 to 1562 (PTDTPSDEPTP). Positions 1563-1595 (SDEPTPSDEPTPSDEPTPSDEPTPSDEPTPSDE) are enriched in pro residues. A compositionally biased stretch (low complexity) spans 1607 to 1617 (PTDTPSDEPTP). Positions 1618-1650 (SDEPTPSDEPTPSDEPTPSDEPTPSDEPTPSDE) are enriched in pro residues. Residues 1662–1672 (PTDTPSDEPTP) are compositionally biased toward low complexity. Pro residues predominate over residues 1673–1693 (SDEPTPSDEPTPSDEPTPSDE). Residues 1705 to 1715 (PTDTPSDEPTP) show a composition bias toward low complexity. Over residues 1716 to 1736 (SDEPTPSDEPTPSDEPTPSDE) the composition is skewed to pro residues. Positions 1748-1758 (PTDTPSDEPTP) are enriched in low complexity. The span at 1759 to 1779 (SDEPTPSDEPTPSDEPTPSDE) shows a compositional bias: pro residues. Positions 1791–1801 (PTDTPSDEPTP) are enriched in low complexity. The span at 1802–1822 (SDEPTPSDEPTPSDEPTPSDE) shows a compositional bias: pro residues. Positions 1834-1844 (PTDTPSDEPTP) are enriched in low complexity. Pro residues predominate over residues 1845-1865 (SDEPTPSDEPTPSDEPTPSDE). The segment covering 1877–1887 (PTDTPSDEPTP) has biased composition (low complexity). Residues 1888-1908 (SDEPTPSDEPTPSDEPTPSDE) show a composition bias toward pro residues. A compositionally biased stretch (low complexity) spans 1920–1930 (PTDTPSDEPTP). Residues 1931–1963 (SDEPTPSDEPTPSDEPTPSDEPTPSDEPTPSDE) show a composition bias toward pro residues. The segment covering 1975–1985 (PTDTPSDEPTP) has biased composition (low complexity). Pro residues-rich tracts occupy residues 1986–2018 (SDEP…PSDE) and 2027–2039 (EPTP…PTPS). A compositionally biased stretch (gly residues) spans 2045–2062 (GSGGSGGSGGGGGGGGGT). SLH domains are found at residues 2067–2140 (PTPT…YGAQ), 2141–2204 (SASP…EIMS), and 2211–2274 (ISNP…GAPK). Low complexity predominate over residues 2073 to 2082 (SKPTSTPAPT).

In terms of assembly, assembled into mono-layered crystalline arrays.

The protein localises to the secreted. It localises to the cell wall. The protein resides in the S-layer. The protein is Cell surface glycoprotein 1 (olpB) of Acetivibrio thermocellus (strain ATCC 27405 / DSM 1237 / JCM 9322 / NBRC 103400 / NCIMB 10682 / NRRL B-4536 / VPI 7372) (Clostridium thermocellum).